Reading from the N-terminus, the 551-residue chain is Structure-specific endonuclease subunit MUS81 (551 aa).

2 disordered regions span residues 84-131 (HLAS…VGYW) and 229-259 (FRPEEHHGEDSAVPEALSEPGTTEGAVQQRP). Positions 92-107 (APSSPSGKKGASKGPP) are enriched in low complexity. Ser95 is subject to Phosphoserine. Positions 110–131 (VQDSSMPVPTQPQAGSTSVGYW) are enriched in polar residues. Positions 124–244 (GSTSVGYWPA…HGEDSAVPEA (121 aa)) are interaction with BLM. The winged helix domain (WHD); critical for endonuclease activity stretch occupies residues 131 to 230 (WPAQNSGARE…GLSTRHAGFR (100 aa)). The segment covering 229–238 (FRPEEHHGED) has biased composition (basic and acidic residues). Positions 270–372 (LLCVDIGETR…HRVYLVEEHG (103 aa)) constitute an ERCC4 domain. Residues Asp274, Glu277, and Asp307 contribute to the active site. Positions 274, 277, 307, 333, and 334 each coordinate Mg(2+). The helix-hairpin-helix (2HhH); involved in DNA recognition and bending stretch occupies residues 471–545 (VREVFARQLM…LSRTLYQLYC (75 aa)).

Belongs to the XPF family. As to quaternary structure, part of the heterodimeric DNA structure-specific endonuclease complex MUS81-EME1. Part of the heterodimeric DNA structure-specific endonuclease complex MUS81-EME2. Interacts with BLM; may stimulate the endonuclease activity of MUS81. Interacts with SLX4/BTBD12; this interaction is direct and links the MUS81-EME1 complex to SLX4, which may coordinate the action of the structure-specific endonuclease during DNA repair. Interacts with DCLRE1B/Apollo. Interacts with RECQL5; this interaction stimulates mitotic DNA synthesis. Interacts with CHEK2. Mg(2+) serves as cofactor. As to expression, expressed highly in testis. Expressed also in bone marrow, brain, thymus and to a lesser extent in heart and skeletal muscle, colon, kidney and spleen.

The protein localises to the nucleus. It is found in the nucleolus. Its function is as follows. Catalytic subunit of two functionally distinct, structure-specific, heterodimeric DNA endonucleases MUS81-EME1 and MUS81-EME2 that are involved in the maintenance of genome stability. Both endonucleases have essentially the same substrate specificity though MUS81-EME2 is more active than its MUS81-EME1 counterpart. Both cleave 3'-flaps and nicked Holliday junctions, and exhibit limited endonuclease activity with 5' flaps and nicked double-stranded DNAs. MUS81-EME2 which is active during the replication of DNA is more specifically involved in replication fork processing. Replication forks frequently encounter obstacles to their passage, including DNA base lesions, DNA interstrand cross-links, difficult-to-replicate sequences, transcription bubbles, or tightly bound proteins. One mechanism for the restart of a stalled replication fork involves nucleolytic cleavage mediated by the MUS81-EME2 endonuclease. By acting upon the stalled fork, MUS81-EME2 generates a DNA double-strand break (DSB) that can be repaired by homologous recombination, leading to the restoration of an active fork. MUS81-EME2 could also function in telomere maintenance. MUS81-EME1, on the other hand, is active later in the cell cycle and functions in the resolution of mitotic recombination intermediates including the Holliday junctions, the four-way DNA intermediates that form during homologous recombination. The chain is Structure-specific endonuclease subunit MUS81 from Mus musculus (Mouse).